A 282-amino-acid polypeptide reads, in one-letter code: Ribosomal RNA small subunit methyltransferase A (282 aa).

S-adenosyl-L-methionine contacts are provided by Asn-28, Leu-30, Gly-55, Glu-77, Asp-103, and Asn-122.

It belongs to the class I-like SAM-binding methyltransferase superfamily. rRNA adenine N(6)-methyltransferase family. RsmA subfamily.

The protein localises to the cytoplasm. The enzyme catalyses adenosine(1518)/adenosine(1519) in 16S rRNA + 4 S-adenosyl-L-methionine = N(6)-dimethyladenosine(1518)/N(6)-dimethyladenosine(1519) in 16S rRNA + 4 S-adenosyl-L-homocysteine + 4 H(+). Its function is as follows. Specifically dimethylates two adjacent adenosines (A1518 and A1519) in the loop of a conserved hairpin near the 3'-end of 16S rRNA in the 30S particle. May play a critical role in biogenesis of 30S subunits. The polypeptide is Ribosomal RNA small subunit methyltransferase A (Paracoccus denitrificans (strain Pd 1222)).